The following is a 1266-amino-acid chain: Phosphatidylinositol 3,4,5-trisphosphate 5-phosphatase 2A (1266 aa).

The SH2 domain maps to 15 to 111; it reads WMHRDLSRAA…GLVTTLLYPV (97 aa). Positions 114–123 are enriched in basic and acidic residues; that stretch reads EETTEDRDYS. Disordered regions lie at residues 114-159 and 879-951; these read EETT…NVTA and DMGG…DATT. Positions 136 to 159 are enriched in polar residues; the sequence is TASTSSMTGSALVSTDTPPENVTA. Basic and acidic residues-rich tracts occupy residues 915–924 and 931–944; these read RVSEEGEKSS and TKEE…KQDP. The NPXY motif signature appears at 958–961; it reads NPAY. Tyr-961 carries the post-translational modification Phosphotyrosine. Disordered stretches follow at residues 986–1132 and 1147–1174; these read PLAN…SALD and EVEY…SFPS. Residues 994–1012 show a composition bias toward low complexity; the sequence is PPAGSVGKSKPPSGSSAQG. Over residues 1045–1056 the composition is skewed to pro residues; sequence RPPPDFPPPPLP. In terms of domain architecture, SAM spans 1203–1266; sequence SVDCSVGEWL…LLASLKQQQK (64 aa).

This sequence belongs to the inositol 1,4,5-trisphosphate 5-phosphatase family. In terms of processing, tyrosine phosphorylated by the members of the SRC family after exposure to a diverse array of extracellular stimuli.

The protein localises to the cytoplasm. It localises to the cytosol. The protein resides in the cytoskeleton. It is found in the membrane. Its subcellular location is the cell projection. The protein localises to the filopodium. It localises to the lamellipodium. The protein resides in the nucleus. It is found in the nucleus speckle. It catalyses the reaction a 1,2-diacyl-sn-glycero-3-phospho-(1D-myo-inositol-3,4,5-trisphosphate) + H2O = a 1,2-diacyl-sn-glycero-3-phospho-(1D-myo-inositol-3,4-bisphosphate) + phosphate. In terms of biological role, phosphatidylinositol (PtdIns) phosphatase that specifically hydrolyzes the 5-phosphate of phosphatidylinositol-3,4,5-trisphosphate (PtdIns(3,4,5)P3) to produce PtdIns(3,4)P2, thereby negatively regulating the PI3K (phosphoinositide 3-kinase) pathways. Plays a central role in regulation of PI3K-dependent insulin signaling, although the precise molecular mechanisms and signaling pathways remain unclear. Part of a signaling pathway that regulates actin cytoskeleton remodeling. Required for the maintenance and dynamic remodeling of actin structures as well as in endocytosis, having a major impact on ligand-induced EGFR internalization and degradation. Participates in regulation of cortical and submembraneous actin. Regulates cell adhesion and cell spreading. Acts as a negative regulator of the FC-gamma-RIIA receptor (FCGR2A). Mediates signaling from the FC-gamma-RIIB receptor (FCGR2B), playing a central role in terminating signal transduction from activating immune/hematopoietic cell receptor systems. May also hydrolyze PtdIns(1,3,4,5)P4, and could thus affect the levels of the higher inositol polyphosphates like InsP6. The chain is Phosphatidylinositol 3,4,5-trisphosphate 5-phosphatase 2A (inppl1a) from Danio rerio (Zebrafish).